A 422-amino-acid polypeptide reads, in one-letter code: Protein phosphatase methylesterase 1 (422 aa).

The interval 1 to 27 is disordered; sequence MSDMFRKSVLNKLPHLPPTRAPWADES. Catalysis depends on residues serine 207, aspartate 234, and histidine 371.

This sequence belongs to the AB hydrolase superfamily.

The catalysed reaction is [phosphatase 2A protein]-C-terminal L-leucine methyl ester + H2O = [phosphatase 2A protein]-C-terminal L-leucine + methanol + H(+). Demethylates proteins that have been reversibly carboxymethylated. Demethylates the phosphatase PP2A catalytic subunit. This is Protein phosphatase methylesterase 1 (PPE1) from Cryptococcus neoformans var. neoformans serotype D (strain B-3501A) (Filobasidiella neoformans).